We begin with the raw amino-acid sequence, 339 residues long: Purple acid phosphatase 4 (339 aa).

The signal sequence occupies residues 1-31 (MSSKFDIGSLSIVMTLLICFLLLSLAPKLEA). Fe cation is bound at residue Asp53. N-linked (GlcNAc...) asparagine glycosylation is present at Asn61. The Fe cation site is built by Asp86 and Tyr89. Asp86 serves as a coordination point for Zn(2+). Zn(2+)-binding residues include Asn124 and His218. Catalysis depends on His227, which acts as the Proton donor. His253 contributes to the Zn(2+) binding site. 253-255 (HDH) provides a ligand contact to substrate. Position 255 (His255) interacts with Fe cation. N-linked (GlcNAc...) asparagine glycosylation occurs at Asn284.

Belongs to the metallophosphoesterase superfamily. Purple acid phosphatase family. In terms of assembly, homodimer. Fe cation serves as cofactor. It depends on Zn(2+) as a cofactor. As to expression, expressed in roots, stems, leaves, flowers and siliques.

Its subcellular location is the secreted. It carries out the reaction a phosphate monoester + H2O = an alcohol + phosphate. In Arabidopsis thaliana (Mouse-ear cress), this protein is Purple acid phosphatase 4 (PAP4).